A 223-amino-acid polypeptide reads, in one-letter code: Probable amino-acid ABC transporter permease protein PatM (223 aa).

The region spanning 19–210 (LGTTMEMATW…GVVVILTRVQ (192 aa)) is the ABC transmembrane type-1 domain. 5 consecutive transmembrane segments (helical) span residues 23–43 (MEMA…LANI), 59–78 (ISFF…YYGL), 90–110 (AFSA…AESI), 156–176 (FIDM…EIMA), and 186–206 (FRFF…VVIL).

The protein belongs to the binding-protein-dependent transport system permease family. HisMQ subfamily.

The protein resides in the cell inner membrane. Probably part of a binding-protein-dependent transport system for an amino acid. Probably responsible for the translocation of the substrate across the membrane. The protein is Probable amino-acid ABC transporter permease protein PatM (patM) of Vibrio harveyi (Beneckea harveyi).